Here is a 240-residue protein sequence, read N- to C-terminus: Probable transcriptional activator (240 aa).

The essential for the oxygen-regulated activity stretch occupies residues 17–28 (CTSCQARHGVVC). The HTH crp-type domain occupies 158-232 (RTAEEKVASL…FRHIIVPDMD (75 aa)). A DNA-binding region (H-T-H motif) is located at residues 191–210 (RAEIADFLGLTIETVSRQMT).

Promotes the microaerobic and symbiotic induction of fixN, possibly by binding to the FNR consensus binding site upstream of fixN. In Rhizobium leguminosarum bv. viciae, this protein is Probable transcriptional activator (fnrN).